The primary structure comprises 373 residues: Phosphoserine aminotransferase (373 aa).

Arg46 is a binding site for L-glutamate. Pyridoxal 5'-phosphate-binding residues include Phe104, Thr150, Asp172, and Gln195. Residue Lys196 is modified to N6-(pyridoxal phosphate)lysine. Residue 247–248 (NT) coordinates pyridoxal 5'-phosphate.

The protein belongs to the class-V pyridoxal-phosphate-dependent aminotransferase family. SerC subfamily. As to quaternary structure, homodimer. The cofactor is pyridoxal 5'-phosphate.

Its subcellular location is the cytoplasm. It carries out the reaction O-phospho-L-serine + 2-oxoglutarate = 3-phosphooxypyruvate + L-glutamate. It catalyses the reaction 4-(phosphooxy)-L-threonine + 2-oxoglutarate = (R)-3-hydroxy-2-oxo-4-phosphooxybutanoate + L-glutamate. It participates in amino-acid biosynthesis; L-serine biosynthesis; L-serine from 3-phospho-D-glycerate: step 2/3. It functions in the pathway cofactor biosynthesis; pyridoxine 5'-phosphate biosynthesis; pyridoxine 5'-phosphate from D-erythrose 4-phosphate: step 3/5. Its function is as follows. Catalyzes the reversible conversion of 3-phosphohydroxypyruvate to phosphoserine and of 3-hydroxy-2-oxo-4-phosphonooxybutanoate to phosphohydroxythreonine. This is Phosphoserine aminotransferase from Rhodococcus jostii (strain RHA1).